Consider the following 560-residue polypeptide: DNA ligase B (560 aa).

The active-site N6-AMP-lysine intermediate is Lys124.

The protein belongs to the NAD-dependent DNA ligase family. LigB subfamily.

It catalyses the reaction NAD(+) + (deoxyribonucleotide)n-3'-hydroxyl + 5'-phospho-(deoxyribonucleotide)m = (deoxyribonucleotide)n+m + AMP + beta-nicotinamide D-nucleotide.. Its function is as follows. Catalyzes the formation of phosphodiester linkages between 5'-phosphoryl and 3'-hydroxyl groups in double-stranded DNA using NAD as a coenzyme and as the energy source for the reaction. This is DNA ligase B from Escherichia coli (strain ATCC 8739 / DSM 1576 / NBRC 3972 / NCIMB 8545 / WDCM 00012 / Crooks).